The chain runs to 292 residues: MEDSKKKGLIEGAILDIINGSIAGACGKVIEFPFDTVKVRLQTQASNVFPTTWSCIKFTYQNEGIARGFFQGIASPLVGACLENATLFVSYNQCSKFLEKHTNVSPLGQILISGGVAGSCASLVLTPVELVKCKLQVANLQVASAKTKHTKVLPTIKAIITERGLAGLWQGQSGTFIRESFGGVAWFATYEIVKKSLKDRHSLDDPKRDESKIWELLISGGSAGLAFNASIFPADTVKSVMQTEHISLTNAVKKIFGKFGLKGFYRGLGITLFRAVPANAAVFYIFETLSAL.

Solcar repeat units lie at residues 11-97 (EGAI…CSKF), 105-196 (SPLG…VKKS), and 211-292 (SKIW…LSAL). The next 6 membrane-spanning stretches (helical) occupy residues 14 to 34 (ILDI…EFPF), 69 to 89 (FFQG…TLFV), 104 to 124 (VSPL…ASLV), 171 to 187 (GQSG…VAWF), 213 to 233 (IWEL…SIFP), and 267 to 287 (GLGI…YIFE).

Belongs to the mitochondrial carrier (TC 2.A.29) family.

Its subcellular location is the mitochondrion inner membrane. Required for arginine biosynthesis. Transports ornithine synthesized from glutamate in the mitochondrial matrix to the cytosol, where it is converted to arginine. The protein is Mitochondrial ornithine transporter 1 (ORT1) of Saccharomyces cerevisiae (strain ATCC 204508 / S288c) (Baker's yeast).